Here is a 167-residue protein sequence, read N- to C-terminus: Urease accessory protein UreE (167 aa).

The protein belongs to the UreE family.

It is found in the cytoplasm. Functionally, involved in urease metallocenter assembly. Binds nickel. Probably functions as a nickel donor during metallocenter assembly. This is Urease accessory protein UreE from Pseudomonas aeruginosa (strain LESB58).